The primary structure comprises 419 residues: MSGAARAGPARLAALALLTCSLWPTRADNASQEYYTALINVTVQEPGRGTPLTFRIDRGRYGLDSPKAEVRGQVLAPLPIHGVADHLGCDPQTRFFVPPNIKQWIALLQRGNCTFKEKISRAAFHNAVAVVIYNNKSKEEPVTMTHPGTGDIIAVMITELRGKDILSYLEKNISVQMTIAVGTRMPPKNFSRGSLVFVSISFIVLMIISSAWLIFYFIQKIRYTNARDRNQRRLGDAAKKAISKLTTRTVKKGDKETDPDFDHCAVCIESYKQNDVVRVLPCKHVFHKSCVDPWLSEHCTCPMCKLNILKALGIVPNLPCTDNVAFDMERLTRTQAVNRRSALGDLANDSSLGLEPLRTSGISPLPQDGELTPRTGEINIAVTKEWFIIASFGLLSALTLCYMIIRATASLNANEVEWF.

The N-terminal stretch at 1-27 is a signal peptide; the sequence is MSGAARAGPARLAALALLTCSLWPTRA. Residues 28–194 are Extracellular-facing; it reads DNASQEYYTA…MPPKNFSRGS (167 aa). N29, N40, N112, N135, N172, and N189 each carry an N-linked (GlcNAc...) asparagine glycan. The PA domain maps to 105 to 176; that stretch reads IALLQRGNCT…SYLEKNISVQ (72 aa). Residues 195–217 traverse the membrane as a helical segment; it reads LVFVSISFIVLMIISSAWLIFYF. Residues 218 to 419 lie on the Cytoplasmic side of the membrane; sequence IQKIRYTNAR…SLNANEVEWF (202 aa). The segment at 264 to 305 adopts an RING-type zinc-finger fold; that stretch reads CAVCIESYKQNDVVRVLPCKHVFHKSCVDPWLSEHCTCPMCK. Position 341 is a phosphoserine (S341).

In terms of tissue distribution, in testis sections, expressed in interstitial tissue and seminiferous tubules. In tubules, expression is mainly in postmeiotic germ cells and to a much lesser extent in Sertoli cells (at protein level). Expressed at high levels in liver, lung, stomach, heart and thymus.

It localises to the membrane. The protein localises to the cytoplasm. It carries out the reaction S-ubiquitinyl-[E2 ubiquitin-conjugating enzyme]-L-cysteine + [acceptor protein]-L-lysine = [E2 ubiquitin-conjugating enzyme]-L-cysteine + N(6)-ubiquitinyl-[acceptor protein]-L-lysine.. It functions in the pathway protein modification; protein ubiquitination. Functionally, acts as an E3 ubiquitin-protein ligase. May have a role during the programmed cell death of hematopoietic cells. The sequence is that of E3 ubiquitin-protein ligase RNF130 from Rattus norvegicus (Rat).